We begin with the raw amino-acid sequence, 887 residues long: Beta-galactosidase 14 (887 aa).

Residues 1–31 (MSKSSRIRMKSRTRYLIAILLVISLCSKASS) form the signal peptide. The active-site Proton donor is Glu-197. The active-site Nucleophile is the Glu-268. Asn-269, Asn-300, Asn-395, and Asn-785 each carry an N-linked (GlcNAc...) asparagine glycan. The SUEL-type lectin domain maps to 752–838 (KDMRLKAVMR…KTLAVQVKCE (87 aa)). Residues 838–852 (EKKEGKQDEKKKKED) are compositionally biased toward basic and acidic residues. Positions 838 to 887 (EKKEGKQDEKKKKEDKDEEEEDDEDDDEEEEEEDKENKDTKDMENKNQDM) are disordered. Over residues 853–871 (KDEEEEDDEDDDEEEEEED) the composition is skewed to acidic residues. The segment covering 872 to 887 (KENKDTKDMENKNQDM) has biased composition (basic and acidic residues).

Belongs to the glycosyl hydrolase 35 family.

The protein resides in the secreted. The protein localises to the extracellular space. It is found in the apoplast. The catalysed reaction is Hydrolysis of terminal non-reducing beta-D-galactose residues in beta-D-galactosides.. The polypeptide is Beta-galactosidase 14 (BGAL14) (Arabidopsis thaliana (Mouse-ear cress)).